Reading from the N-terminus, the 276-residue chain is NH(3)-dependent NAD(+) synthetase (276 aa).

51–58 (GISGGVDS) contacts ATP. D57 is a binding site for Mg(2+). Residue R148 participates in deamido-NAD(+) binding. T168 contributes to the ATP binding site. Mg(2+) is bound at residue E173. Deamido-NAD(+) is bound by residues K181 and D188. K197 and T219 together coordinate ATP. 268 to 269 (HK) provides a ligand contact to deamido-NAD(+).

It belongs to the NAD synthetase family. Homodimer.

The catalysed reaction is deamido-NAD(+) + NH4(+) + ATP = AMP + diphosphate + NAD(+) + H(+). It functions in the pathway cofactor biosynthesis; NAD(+) biosynthesis; NAD(+) from deamido-NAD(+) (ammonia route): step 1/1. Functionally, catalyzes the ATP-dependent amidation of deamido-NAD to form NAD. Uses ammonia as a nitrogen source. This is NH(3)-dependent NAD(+) synthetase from Streptomyces coelicolor (strain ATCC BAA-471 / A3(2) / M145).